The primary structure comprises 361 residues: Cyclin-dependent kinase 10 (361 aa).

The region spanning 37 to 321 (FEKLNRIGEG…AGDCLESSYF (285 aa)) is the Protein kinase domain. ATP-binding positions include 43–51 (IGEGTYGIV) and lysine 66. Aspartate 161 serves as the catalytic Proton acceptor. The residue at position 194 (threonine 194) is a Phosphothreonine. The tract at residues 332–361 (LMPTFPHHRNKRATPATSLGTESQSRRGRP) is disordered.

The protein belongs to the protein kinase superfamily. CMGC Ser/Thr protein kinase family. CDC2/CDKX subfamily. In terms of assembly, heterodimer with CCNQ, the interaction is required for kinase activity. Interacts with ETS2. Interacts with PRK2.

The protein resides in the cytoplasm. It is found in the cytoskeleton. Its subcellular location is the cilium basal body. It carries out the reaction L-seryl-[protein] + ATP = O-phospho-L-seryl-[protein] + ADP + H(+). It catalyses the reaction L-threonyl-[protein] + ATP = O-phospho-L-threonyl-[protein] + ADP + H(+). Cyclin-dependent kinase that phosphorylates the transcription factor ETS2 (in vitro) and positively controls its proteasomal degradation (in cells). Involved in the regulation of actin cytoskeleton organization through the phosphorylation of actin dynamics regulators such as PKN2. Is a negative regulator of ciliogenesis through phosphorylation of PKN2 and promotion of RhoA signaling. This is Cyclin-dependent kinase 10 (CDK10) from Bos taurus (Bovine).